A 99-amino-acid chain; its full sequence is Protein Tat (99 aa).

The tract at residues 1–24 (MDPVDPKLEPWNHPGSQPQTACNN) is interaction with human CREBBP. The segment at 1–48 (MDPVDPKLEPWNHPGSQPQTACNNCYCKKCCYHCQMCFLKKGLGISYG) is transactivation. Cys22, Cys25, and Cys27 together coordinate Zn(2+). The tract at residues 22-37 (CNNCYCKKCCYHCQMC) is cysteine-rich. Residue Lys28 is modified to N6-acetyllysine; by host PCAF. Zn(2+)-binding residues include Cys30, His33, Cys34, and Cys37. The segment at 38-48 (FLKKGLGISYG) is core. The segment covering 48–58 (GRKKRSQRHRT) has biased composition (basic residues). Residues 48–99 (GRKKRSQRHRTPASLQDHQNSISKQPLSRTHGDPTGPKEQKKEVASKTETDP) are disordered. The Nuclear localization signal, RNA-binding (TAR), and protein transduction signature appears at 49-57 (RKKRSQRHR). The interval 49–86 (RKKRSQRHRTPASLQDHQNSISKQPLSRTHGDPTGPKE) is interaction with the host capping enzyme RNGTT. An N6-acetyllysine; by host EP300 and GCN5L2 mark is found at Lys50 and Lys51. Arg52 is modified (asymmetric dimethylarginine; by host PRMT6). Over residues 60 to 75 (ASLQDHQNSISKQPLS) the composition is skewed to polar residues. Lys71 participates in a covalent cross-link: Glycyl lysine isopeptide (Lys-Gly) (interchain with G-Cter in ubiquitin). Positions 77–99 (THGDPTGPKEQKKEVASKTETDP) are enriched in basic and acidic residues.

The protein belongs to the lentiviruses Tat family. As to quaternary structure, interacts with host CCNT1. Associates with the P-TEFb complex composed at least of Tat, P-TEFb (CDK9 and CCNT1), TAR RNA, RNA Pol II. Recruits the HATs CREBBP, TAF1/TFIID, EP300, PCAF and GCN5L2. Interacts with host KAT5/Tip60; this interaction targets the latter to degradation. Interacts with the host deacetylase SIRT1. Interacts with host capping enzyme RNGTT; this interaction stimulates RNGTT. Binds to host KDR, and to the host integrins ITGAV/ITGB3 and ITGA5/ITGB1. Interacts with host KPNB1/importin beta-1 without previous binding to KPNA1/importin alpha-1. Interacts with EIF2AK2. Interacts with host nucleosome assembly protein NAP1L1; this interaction may be required for the transport of Tat within the nucleus, since the two proteins interact at the nuclear rim. Interacts with host C1QBP/SF2P32; this interaction involves lysine-acetylated Tat. Interacts with the host chemokine receptors CCR2, CCR3 and CXCR4. Interacts with host DPP4/CD26; this interaction may trigger an anti-proliferative effect. Interacts with host LDLR. Interacts with the host extracellular matrix metalloproteinase MMP1. Interacts with host PRMT6; this interaction mediates Tat's methylation. Interacts with, and is ubiquitinated by MDM2/Hdm2. Interacts with host PSMC3 and HTATIP2. Interacts with STAB1; this interaction may overcome SATB1-mediated repression of IL2 and IL2RA (interleukin) in T cells by binding to the same domain than HDAC1. Interacts (when acetylated) with human CDK13, thereby increasing HIV-1 mRNA splicing and promoting the production of the doubly spliced HIV-1 protein Nef. Interacts with host TBP; this interaction modulates the activity of transcriptional pre-initiation complex. Interacts with host RELA. Interacts with host PLSCR1; this interaction negatively regulates Tat transactivation activity by altering its subcellular distribution. Asymmetrical arginine methylation by host PRMT6 seems to diminish the transactivation capacity of Tat and affects the interaction with host CCNT1. In terms of processing, acetylation by EP300, CREBBP, GCN5L2/GCN5 and PCAF regulates the transactivation activity of Tat. EP300-mediated acetylation of Lys-50 promotes dissociation of Tat from the TAR RNA through the competitive binding to PCAF's bromodomain. In addition, the non-acetylated Tat's N-terminus can also interact with PCAF. PCAF-mediated acetylation of Lys-28 enhances Tat's binding to CCNT1. Lys-50 is deacetylated by SIRT1. Post-translationally, polyubiquitination by host MDM2 does not target Tat to degradation, but activates its transactivation function and fosters interaction with CCNT1 and TAR RNA. Phosphorylated by EIF2AK2 on serine and threonine residues adjacent to the basic region important for TAR RNA binding and function. Phosphorylation of Tat by EIF2AK2 is dependent on the prior activation of EIF2AK2 by dsRNA.

It is found in the host nucleus. The protein resides in the host nucleolus. Its subcellular location is the host cytoplasm. It localises to the secreted. Transcriptional activator that increases RNA Pol II processivity, thereby increasing the level of full-length viral transcripts. Recognizes a hairpin structure at the 5'-LTR of the nascent viral mRNAs referred to as the transactivation responsive RNA element (TAR) and recruits the cyclin T1-CDK9 complex (P-TEFb complex) that will in turn hyperphosphorylate the RNA polymerase II to allow efficient elongation. The CDK9 component of P-TEFb and other Tat-activated kinases hyperphosphorylate the C-terminus of RNA Pol II that becomes stabilized and much more processive. Other factors such as HTATSF1/Tat-SF1, SUPT5H/SPT5, and HTATIP2 are also important for Tat's function. Besides its effect on RNA Pol II processivity, Tat induces chromatin remodeling of proviral genes by recruiting the histone acetyltransferases (HATs) CREBBP, EP300 and PCAF to the chromatin. This also contributes to the increase in proviral transcription rate, especially when the provirus integrates in transcriptionally silent region of the host genome. To ensure maximal activation of the LTR, Tat mediates nuclear translocation of NF-kappa-B by interacting with host RELA. Through its interaction with host TBP, Tat may also modulate transcription initiation. Tat can reactivate a latently infected cell by penetrating in it and transactivating its LTR promoter. In the cytoplasm, Tat is thought to act as a translational activator of HIV-1 mRNAs. Functionally, extracellular circulating Tat can be endocytosed by surrounding uninfected cells via the binding to several surface receptors such as CD26, CXCR4, heparan sulfate proteoglycans (HSPG) or LDLR. Neurons are rarely infected, but they internalize Tat via their LDLR. Through its interaction with nuclear HATs, Tat is potentially able to control the acetylation-dependent cellular gene expression. Modulates the expression of many cellular genes involved in cell survival, proliferation or in coding for cytokines or cytokine receptors. Tat plays a role in T-cell and neurons apoptosis. Tat induced neurotoxicity and apoptosis probably contribute to neuroAIDS. Circulating Tat also acts as a chemokine-like and/or growth factor-like molecule that binds to specific receptors on the surface of the cells, affecting many cellular pathways. In the vascular system, Tat binds to ITGAV/ITGB3 and ITGA5/ITGB1 integrins dimers at the surface of endothelial cells and competes with bFGF for heparin-binding sites, leading to an excess of soluble bFGF. The polypeptide is Protein Tat (Homo sapiens (Human)).